A 431-amino-acid chain; its full sequence is Tol-Pal system protein TolB (431 aa).

Residues 1 to 26 (MSLMTKLGFRALVASCLITAGSAANA) form the signal peptide. Residues 411–431 (PQILSVQGGSVREPSWGPFMQ) are disordered.

It belongs to the TolB family. In terms of assembly, the Tol-Pal system is composed of five core proteins: the inner membrane proteins TolA, TolQ and TolR, the periplasmic protein TolB and the outer membrane protein Pal. They form a network linking the inner and outer membranes and the peptidoglycan layer.

It is found in the periplasm. Functionally, part of the Tol-Pal system, which plays a role in outer membrane invagination during cell division and is important for maintaining outer membrane integrity. The polypeptide is Tol-Pal system protein TolB (Burkholderia lata (strain ATCC 17760 / DSM 23089 / LMG 22485 / NCIMB 9086 / R18194 / 383)).